A 334-amino-acid chain; its full sequence is Fructose-1,6-bisphosphatase class 1 (334 aa).

E89, D112, L114, and D115 together coordinate Mg(2+). Substrate is bound by residues 115 to 118 (DGSS), N208, Y241, and K271. E277 is a binding site for Mg(2+).

This sequence belongs to the FBPase class 1 family. In terms of assembly, homotetramer. Mg(2+) is required as a cofactor.

Its subcellular location is the cytoplasm. The enzyme catalyses beta-D-fructose 1,6-bisphosphate + H2O = beta-D-fructose 6-phosphate + phosphate. It functions in the pathway carbohydrate biosynthesis; gluconeogenesis. The chain is Fructose-1,6-bisphosphatase class 1 from Photorhabdus laumondii subsp. laumondii (strain DSM 15139 / CIP 105565 / TT01) (Photorhabdus luminescens subsp. laumondii).